We begin with the raw amino-acid sequence, 403 residues long: MTLSSADQARLDQFWEHCLKNQYFNIGYPENADFNYAQLHRFLRFSINNCGDWAEPGNYLLNSFDFEKDVMAYFAELFSIPLEESWGYVTNGGTEGNMFGCYLARELFPTGTLYYSKDTHYSVAKIVKLLRIDCRAVESLPNGEIDYDDLMAKIAADQEQHPIIFVNVGTTMRGAIDNIATIQQRLEEVGIPREDYYLHADAALSGMILPFVDNPQPFNFADGVDSICVSGHKMIGSPIPCGIVVAKRENVERISVDVDYIRANDKTISGSRNGHTPMMMWAALRSHSPAQWRRRVRHSLNSAQYAVDRLQAAGIDAWRHDNSITVVFPCPSSRIARKYCLATSGDTAHLITTPHHQDKSMIDALIDEVIAEHQPNEWRAGLGLAGLDGVPPERVAASHFDVI.

His-120 lines the substrate pocket. Lys-233 is modified (N6-(pyridoxal phosphate)lysine).

This sequence belongs to the group II decarboxylase family. In terms of assembly, homotetramer. The cofactor is pyridoxal 5'-phosphate.

The catalysed reaction is L-histidine + H(+) = histamine + CO2. In Pseudomonas entomophila (strain L48), this protein is Histidine decarboxylase.